Reading from the N-terminus, the 222-residue chain is MKFFPLLLLIGVVGYIMNVLFTTWLPTNYMFDPKTLNEICNSVISKHNAAEGLSTEDLLQDVRDALASHYGDEYINRYVKEEWVFNNAGGAMGQMIILHASVSEYLILFGTAVGTEGHTGVHFADDYFTILHGTQIAALPYATEAEVYTPGMTHHLKKGYAKQYSMPGGSFALELAQGWIPCMLPFGFLDTFSSTLDLYTLYRTVYLTARDMGKNLLQNKKF.

Residues 3–23 form a helical membrane-spanning segment; sequence FFPLLLLIGVVGYIMNVLFTT.

This sequence belongs to the ERG2 family.

Its subcellular location is the endoplasmic reticulum membrane. The catalysed reaction is fecosterol = episterol. The protein operates within steroid metabolism; ergosterol biosynthesis; ergosterol from zymosterol: step 2/5. Catalytic activity is inhibited by the morphilines tridemorph, fenpropimorph, and fenpropidin. In terms of biological role, C-8 sterol isomerase; part of the third module of ergosterol biosynthesis pathway that includes the late steps of the pathway. ERG2 catalyzes the reaction which results in unsaturation at C-7 in the B ring of sterols and thus converts fecosterol to episterol. The third module or late pathway involves the ergosterol synthesis itself through consecutive reactions that mainly occur in the endoplasmic reticulum (ER) membrane. Firstly, the squalene synthase ERG9 catalyzes the condensation of 2 farnesyl pyrophosphate moieties to form squalene, which is the precursor of all steroids. Squalene synthase is crucial for balancing the incorporation of farnesyl diphosphate (FPP) into sterol and nonsterol isoprene synthesis. Secondly, the squalene epoxidase ERG1 catalyzes the stereospecific oxidation of squalene to (S)-2,3-epoxysqualene, which is considered to be a rate-limiting enzyme in steroid biosynthesis. Then, the lanosterol synthase ERG7 catalyzes the cyclization of (S)-2,3 oxidosqualene to lanosterol, a reaction that forms the sterol core. In the next steps, lanosterol is transformed to zymosterol through a complex process involving various demethylation, reduction and desaturation reactions. The lanosterol 14-alpha-demethylase ERG11 (also known as CYP51) catalyzes C14-demethylation of lanosterol to produce 4,4'-dimethyl cholesta-8,14,24-triene-3-beta-ol, which is critical for ergosterol biosynthesis. The C-14 reductase ERG24 reduces the C14=C15 double bond of 4,4-dimethyl-cholesta-8,14,24-trienol to produce 4,4-dimethyl-cholesta-8,24-dienol. 4,4-dimethyl-cholesta-8,24-dienol is substrate of the C-4 demethylation complex ERG25-ERG26-ERG27 in which ERG25 catalyzes the three-step monooxygenation required for the demethylation of 4,4-dimethyl and 4alpha-methylsterols, ERG26 catalyzes the oxidative decarboxylation that results in a reduction of the 3-beta-hydroxy group at the C-3 carbon to an oxo group, and ERG27 is responsible for the reduction of the keto group on the C-3. ERG28 has a role as a scaffold to help anchor ERG25, ERG26 and ERG27 to the endoplasmic reticulum and ERG29 regulates the activity of the iron-containing C4-methylsterol oxidase ERG25. Then, the sterol 24-C-methyltransferase ERG6 catalyzes the methyl transfer from S-adenosyl-methionine to the C-24 of zymosterol to form fecosterol. The C-8 sterol isomerase ERG2 catalyzes the reaction which results in unsaturation at C-7 in the B ring of sterols and thus converts fecosterol to episterol. The sterol-C5-desaturase ERG3 then catalyzes the introduction of a C-5 double bond in the B ring to produce 5-dehydroepisterol. The C-22 sterol desaturase ERG5 further converts 5-dehydroepisterol into ergosta-5,7,22,24(28)-tetraen-3beta-ol by forming the C-22(23) double bond in the sterol side chain. Finally, ergosta-5,7,22,24(28)-tetraen-3beta-ol is substrate of the C-24(28) sterol reductase ERG4 to produce ergosterol. This chain is C-8 sterol isomerase ERG2, found in Saccharomyces cerevisiae (strain ATCC 204508 / S288c) (Baker's yeast).